A 229-amino-acid chain; its full sequence is Octanoyltransferase (229 aa).

One can recognise a BPL/LPL catalytic domain in the interval 30 to 223; sequence PDTPDTIWLV…QLQQRAQAHP (194 aa). Substrate is bound by residues 69–76, 141–143, and 154–156; these read RGGQITYH, ALG, and GVS. The Acyl-thioester intermediate role is filled by Cys-172.

It belongs to the LipB family.

It localises to the cytoplasm. It carries out the reaction octanoyl-[ACP] + L-lysyl-[protein] = N(6)-octanoyl-L-lysyl-[protein] + holo-[ACP] + H(+). The protein operates within protein modification; protein lipoylation via endogenous pathway; protein N(6)-(lipoyl)lysine from octanoyl-[acyl-carrier-protein]: step 1/2. Its function is as follows. Catalyzes the transfer of endogenously produced octanoic acid from octanoyl-acyl-carrier-protein onto the lipoyl domains of lipoate-dependent enzymes. Lipoyl-ACP can also act as a substrate although octanoyl-ACP is likely to be the physiological substrate. The sequence is that of Octanoyltransferase from Ralstonia pickettii (strain 12J).